We begin with the raw amino-acid sequence, 281 residues long: Putrescine transport system permease protein PotI (281 aa).

Over 1-13 the chain is Cytoplasmic; it reads MNNLPVVRSPWRI. The chain crosses the membrane as a helical span at residues 14–33; sequence VILLLGFTFLYAPMLMLVIY. Residues 34 to 68 are Periplasmic-facing; it reads SFNSSKLVTVWAGWSTRWYGELLRDDAMMSAVGLS. The 196-residue stretch at 65 to 260 folds into the ABC transmembrane type-1 domain; sequence VGLSLTIAAC…GAVGIVGFIA (196 aa). The helical transmembrane segment at 69–88 threads the bilayer; sequence LTIAACAATAAAILGTIAAV. Over 89–115 the chain is Cytoplasmic; sequence VLVRFGRFRGSNGFAFMITAPLVMPDV. Residues 116-135 traverse the membrane as a helical segment; it reads ITGLSLLLLFVALAHAIGWP. Residues 136 to 140 lie on the Periplasmic side of the membrane; sequence ADRGM. Residues 141 to 160 traverse the membrane as a helical segment; sequence LTIWLAHVTFCTAYVAVVIS. The Cytoplasmic segment spans residues 161–186; that stretch reads SRLRELDRSIEEAAMDLGATPLKVFF. Residues 187–206 form a helical membrane-spanning segment; that stretch reads VITLPMIMPAIISGWLLAFT. Over 207-243 the chain is Periplasmic; it reads LSLDDLVIASFVSGPGATTLPMLVFSSVRMGVNPEIN. Residues 244–263 traverse the membrane as a helical segment; that stretch reads ALATLILGAVGIVGFIAWYL. Residues 264-281 are Cytoplasmic-facing; sequence MARAEKQRIRDIQRARRG.

It belongs to the binding-protein-dependent transport system permease family. CysTW subfamily. The complex is composed of two ATP-binding proteins (PotG), two transmembrane proteins (PotH and PotI) and a solute-binding protein (PotF).

The protein localises to the cell inner membrane. Part of the ABC transporter complex PotFGHI involved in putrescine uptake. Responsible for the translocation of the substrate across the membrane. This is Putrescine transport system permease protein PotI from Escherichia coli O6:H1 (strain CFT073 / ATCC 700928 / UPEC).